A 353-amino-acid polypeptide reads, in one-letter code: UPF0283 membrane protein YcjF (353 aa).

The segment covering 1–19 (MSEPLKPRIDFAEPLKEEP) has biased composition (basic and acidic residues). The disordered stretch occupies residues 1–35 (MSEPLKPRIDFAEPLKEEPTSAFKAQQTFSEAESR). Over 1 to 69 (MSEPLKPRID…LRPKRSLWRK (69 aa)) the chain is Periplasmic. A helical transmembrane segment spans residues 70 to 90 (MVMGGLALFGASVVGQGVQWT). At 91-99 (MNAWQTQDW) the chain is on the cytoplasmic side. The helical transmembrane segment at 100–120 (VALGGCAAGALIVGAGVGSVV) threads the bilayer. The Periplasmic segment spans residues 121-212 (TEWRRLWRLR…ARREISRFAA (92 aa)). The chain crosses the membrane as a helical span at residues 213–233 (ESTLMIAVSPLALVDMAFIAW). Residues 234–353 (RNLRLINRIA…LQKSKSSPEK (120 aa)) lie on the Cytoplasmic side of the membrane.

This sequence belongs to the UPF0283 family.

Its subcellular location is the cell inner membrane. The chain is UPF0283 membrane protein YcjF (ycjF) from Salmonella typhimurium (strain LT2 / SGSC1412 / ATCC 700720).